A 212-amino-acid polypeptide reads, in one-letter code: Stromal cell-derived factor 2-like protein (212 aa).

The signal sequence occupies residues M1–A19. N-linked (GlcNAc...) asparagine glycosylation occurs at N20. MIR domains follow at residues I29–P86, G94–E149, and G151–G206.

It localises to the secreted. This is Stromal cell-derived factor 2-like protein from Dictyostelium discoideum (Social amoeba).